We begin with the raw amino-acid sequence, 362 residues long: Probable cysteine protease RDL2 (362 aa).

An N-terminal signal peptide occupies residues 1–28 (MAATPIRVIVSALVILSVLLLSSSLGVA). A propeptide spans 29–129 (TETEIERNET…ERYLYKEGDV (101 aa)) (activation peptide). The N-linked (GlcNAc...) asparagine glycan is linked to Asn-36. Disulfide bonds link Cys-151–Cys-194 and Cys-185–Cys-228. The active site involves Cys-154. An N-linked (GlcNAc...) asparagine glycan is attached at Asn-234. An intrachain disulfide couples Cys-287 to Cys-338. Catalysis depends on residues His-293 and Asn-313.

The protein belongs to the peptidase C1 family.

Its function is as follows. Probable thiol protease. The polypeptide is Probable cysteine protease RDL2 (Arabidopsis thaliana (Mouse-ear cress)).